A 644-amino-acid polypeptide reads, in one-letter code: DNA mismatch repair protein MutL (644 aa).

The segment at 336 to 356 (KRNINPLNRDDKTKDKSEYQK) is disordered. Basic and acidic residues predominate over residues 343–356 (NRDDKTKDKSEYQK).

Belongs to the DNA mismatch repair MutL/HexB family.

In terms of biological role, this protein is involved in the repair of mismatches in DNA. It is required for dam-dependent methyl-directed DNA mismatch repair. May act as a 'molecular matchmaker', a protein that promotes the formation of a stable complex between two or more DNA-binding proteins in an ATP-dependent manner without itself being part of a final effector complex. The sequence is that of DNA mismatch repair protein MutL from Halothermothrix orenii (strain H 168 / OCM 544 / DSM 9562).